The sequence spans 471 residues: Nuclear receptor subfamily 0 group B member 1 (471 aa).

3 tandem repeats follow at residues 1 to 67 (MAGE…YRCC), 68 to 134 (FCGE…YRCC), and 135 to 201 (FCGE…YRCC). The 4 X 67 AA tandem repeats stretch occupies residues 1–253 (MAGEDHQWQG…QRVALKSPQV (253 aa)). Short sequence motifs (LXXLL motif) lie at residues 13–17 (LYNML), 80–84 (LYNML), and 147–151 (LYSLL). Residues 202 to 253 (FCGEDHPRQSGILCNMPMSAKQTHVAPEAQPGAPWWDPSCAAQRVALKSPQV) form a 4; truncated repeat. Residues 210–470 (QSGILCNMPM…DMMLEMLCAK (261 aa)) form the NR LBD domain. The short motif at 462–467 (MMLEML) is the AF-2 motif element.

Belongs to the nuclear hormone receptor family. NR0 subfamily. In terms of assembly, homodimer. Interacts with NR5A1, NR5A2, NR0B2 and with COPS2. Interacts with ESRRB; represses ESRRB activity at the GATA6 promoter.

It is found in the nucleus. It localises to the cytoplasm. In terms of biological role, nuclear receptor that lacks a DNA-binding domain and acts as a corepressor that inhibits the transcriptional activity of other nuclear receptors through heterodimeric interactions. Component of a cascade required for the development of the hypothalamic-pituitary-adrenal-gonadal axis. May also have a role in the development of the embryo and in the maintenance of embryonic stem cell pluripotency. This chain is Nuclear receptor subfamily 0 group B member 1 (NR0B1), found in Sus scrofa (Pig).